A 342-amino-acid polypeptide reads, in one-letter code: Holliday junction branch migration complex subunit RuvB (342 aa).

A large ATPase domain (RuvB-L) region spans residues 1–181; the sequence is MENRMVTPFD…FGMLCAMEFY (181 aa). Residues Leu20, Arg21, Gly62, Lys65, Thr66, Thr67, 128–130, Arg171, Tyr181, and Arg218 each bind ATP; that span reads EDY. Residue Thr66 coordinates Mg(2+). The segment at 182 to 252 is small ATPAse domain (RuvB-S); it reads TDEELMEIVV…GAKAALDLLE (71 aa). The interval 255–342 is head domain (RuvB-H); that stretch reads KEGLDKIDNK…KDNQVSIFNK (88 aa). Arg310 and Arg315 together coordinate DNA.

It belongs to the RuvB family. As to quaternary structure, homohexamer. Forms an RuvA(8)-RuvB(12)-Holliday junction (HJ) complex. HJ DNA is sandwiched between 2 RuvA tetramers; dsDNA enters through RuvA and exits via RuvB. An RuvB hexamer assembles on each DNA strand where it exits the tetramer. Each RuvB hexamer is contacted by two RuvA subunits (via domain III) on 2 adjacent RuvB subunits; this complex drives branch migration. In the full resolvosome a probable DNA-RuvA(4)-RuvB(12)-RuvC(2) complex forms which resolves the HJ.

The protein resides in the cytoplasm. It catalyses the reaction ATP + H2O = ADP + phosphate + H(+). Functionally, the RuvA-RuvB-RuvC complex processes Holliday junction (HJ) DNA during genetic recombination and DNA repair, while the RuvA-RuvB complex plays an important role in the rescue of blocked DNA replication forks via replication fork reversal (RFR). RuvA specifically binds to HJ cruciform DNA, conferring on it an open structure. The RuvB hexamer acts as an ATP-dependent pump, pulling dsDNA into and through the RuvAB complex. RuvB forms 2 homohexamers on either side of HJ DNA bound by 1 or 2 RuvA tetramers; 4 subunits per hexamer contact DNA at a time. Coordinated motions by a converter formed by DNA-disengaged RuvB subunits stimulates ATP hydrolysis and nucleotide exchange. Immobilization of the converter enables RuvB to convert the ATP-contained energy into a lever motion, pulling 2 nucleotides of DNA out of the RuvA tetramer per ATP hydrolyzed, thus driving DNA branch migration. The RuvB motors rotate together with the DNA substrate, which together with the progressing nucleotide cycle form the mechanistic basis for DNA recombination by continuous HJ branch migration. Branch migration allows RuvC to scan DNA until it finds its consensus sequence, where it cleaves and resolves cruciform DNA. The sequence is that of Holliday junction branch migration complex subunit RuvB from Clostridium botulinum (strain Loch Maree / Type A3).